Consider the following 449-residue polypeptide: UDP-N-acetylmuramate--L-alanine ligase (449 aa).

An ATP-binding site is contributed by Gly-110–Thr-116.

Belongs to the MurCDEF family.

Its subcellular location is the cytoplasm. It catalyses the reaction UDP-N-acetyl-alpha-D-muramate + L-alanine + ATP = UDP-N-acetyl-alpha-D-muramoyl-L-alanine + ADP + phosphate + H(+). It participates in cell wall biogenesis; peptidoglycan biosynthesis. Functionally, cell wall formation. This is UDP-N-acetylmuramate--L-alanine ligase from Desulfitobacterium hafniense (strain Y51).